A 234-amino-acid polypeptide reads, in one-letter code: MAELTAIRGLAFDLDGTLIHSAPGLAAAIDQALVAQSLPAAGESRVATWIGNGADVMVERALRWAGVEPTAARVQETRERFDSYYAQTVDSGSTLFLQVKETLAQLAQQGVPMAVVTNKPTPFVAPLLAGLGIGDYFSLIIGGDDVIVKKPHPAPLYLVLGKLGLRASELLFVGDSRNDIQAAQAAGCRSVGMTYGYNYGEAIELSQPDVVLDRFADILPLIGHSSSHNQEPLV.

The Nucleophile role is filled by Asp-13. 3 residues coordinate Mg(2+): Asp-13, Asp-15, and Asp-175.

Belongs to the HAD-like hydrolase superfamily. CbbY/CbbZ/Gph/YieH family. Monomer. Requires Mg(2+) as cofactor. Chloride is required as a cofactor.

The enzyme catalyses 2-phosphoglycolate + H2O = glycolate + phosphate. It functions in the pathway organic acid metabolism; glycolate biosynthesis; glycolate from 2-phosphoglycolate: step 1/1. Specifically catalyzes the dephosphorylation of 2-phosphoglycolate. Is involved in the dissimilation of the intracellular 2-phosphoglycolate formed during the DNA repair of 3'-phosphoglycolate ends, a major class of DNA lesions induced by oxidative stress. This Pectobacterium atrosepticum (strain SCRI 1043 / ATCC BAA-672) (Erwinia carotovora subsp. atroseptica) protein is Phosphoglycolate phosphatase.